Consider the following 352-residue polypeptide: Glutamine synthetase cytosolic isozyme (352 aa).

The 80-residue stretch at 19–98 (FIAEYIWIDA…VMCDTYTPAG (80 aa)) folds into the GS beta-grasp domain. In terms of domain architecture, GS catalytic spans 105–352 (KRCNAAKIFS…TSMIAETTIL (248 aa)).

The protein belongs to the glutamine synthetase family. Homooctamer.

It is found in the cytoplasm. The enzyme catalyses L-glutamate + NH4(+) + ATP = L-glutamine + ADP + phosphate + H(+). This is Glutamine synthetase cytosolic isozyme (GLN1) from Daucus carota (Wild carrot).